The sequence spans 419 residues: tRNA (guanine-N(7)-)-methyltransferase non-catalytic subunit wuho (419 aa).

The segment covering 51–61 (STAEQQSAAAE) has biased composition (low complexity). Positions 51–75 (STAEQQSAAAETGGGSVVEGEEPKD) are disordered. WD repeat units lie at residues 87-127 (APTV…AQLV), 174-213 (GHLS…DIHS), and 217-255 (GHKE…ELLR).

It belongs to the WD repeat TRM82 family. Forms a heterodimer with the catalytic subunit Mettl1. Interacts with mei-P26 and weakly interacts with bgcn; required for the function or formation of the mei-P26-bgcn-bam-sxl complex. Interacts with nanos; may be involved in mei-P26-dependent derepression of the BMP signaling pathway. Interacts with Myc; the interaction may be mediated by mei-P26 and may be involved in the regulation of ribosome biogenesis. As to expression, in testis, it is present at high level in hub cells, a niche for germline stem cells of testis. Ubiquitously expressed in all testicular cells throughout spermatogenesis. Ubiquitously expressed in all germline and somatic cells of the ovary.

It localises to the nucleus. The protein resides in the cytoplasm. Its pathway is tRNA modification; N(7)-methylguanine-tRNA biosynthesis. In terms of biological role, required for the Mettl1-dependent formation of N(7)-methylguanine at position 46 (m7G46) in tRNA. In the Mettl1-wuho methyltransferase complex, it is required to stabilize and induce conformational changes of the catalytic subunit. Required for binding of nanos mRNA and repression of translation by the mei-P26-bgcn-bam-sxl complex. May cooperate with mei-P26 and nanos to derepress the BMP signaling pathway. May cooperate with mei-P26 to suppress expression of a subset of microRNAs. May cooperate with mei-P26 to regulate bam expression levels in germline cells during gametogenesis. Required to promote mitosis to meiosis transition during gametogenesis. May regulate germline cell division in part by regulating ribosome biogenesis. The sequence is that of tRNA (guanine-N(7)-)-methyltransferase non-catalytic subunit wuho from Drosophila willistoni (Fruit fly).